Here is a 239-residue protein sequence, read N- to C-terminus: LexA repressor (239 aa).

The H-T-H motif DNA-binding region spans 26-46 (FDEMKDALDLASKSGIHRLIT). The tract at residues 84-107 (SPSVIEGSLGKPQPVATPAPAKSV) is disordered. Residues serine 159 and lysine 197 each act as for autocatalytic cleavage activity in the active site.

This sequence belongs to the peptidase S24 family. In terms of assembly, homodimer.

The enzyme catalyses Hydrolysis of Ala-|-Gly bond in repressor LexA.. Its function is as follows. Represses a number of genes involved in the response to DNA damage (SOS response), including recA and lexA. In the presence of single-stranded DNA, RecA interacts with LexA causing an autocatalytic cleavage which disrupts the DNA-binding part of LexA, leading to derepression of the SOS regulon and eventually DNA repair. This Rhizobium johnstonii (strain DSM 114642 / LMG 32736 / 3841) (Rhizobium leguminosarum bv. viciae) protein is LexA repressor.